Reading from the N-terminus, the 448-residue chain is Arginine synthetase ArcE (448 aa).

As to quaternary structure, probably forms homotetramers and higher assemblies of tetramers. It depends on Mg(2+) as a cofactor.

The enzyme catalyses L-arginine + ADP + phosphate + H(+) = L-citrulline + NH4(+) + ATP. It functions in the pathway amino-acid biosynthesis; L-proline biosynthesis. Its pathway is amino-acid degradation; L-arginine degradation. It participates in amino-acid biosynthesis; L-arginine biosynthesis. In terms of biological role, arginine deiminase involved in an arginine synthetase pathway, which provides citrulline and ornithine, the precursors for proline biosynthesis. Catalyzes the conversion of L-arginine to citrulline while conserving the energy of arginine deimination to generate ATP from ADP and free phosphate. Is specific toward L-arginine and cannot use D-arginine, agmatine, guanidine, L-alanine-L-arginine dipeptide and L-arginine-L-alanine dipeptide. Can also use CDP, GDP or UDP, with lower activity (38%, 8.4% and 13.3%, respectively). The enzyme can also catalyze the reverse reaction: the ATP-dependent generation of arginine from citrulline in a single reaction by using free ammonia, without the requirement of aspartic acid. In vivo, most likely functions in the arginine catabolism to produce citrulline for proline biosynthesis while also generating ATP, but it can also contribute to arginine biosynthesis when the necessary precursors such as citrulline are abundant. The sequence is that of Arginine synthetase ArcE from Thermococcus kodakarensis (strain ATCC BAA-918 / JCM 12380 / KOD1) (Pyrococcus kodakaraensis (strain KOD1)).